Here is a 1221-residue protein sequence, read N- to C-terminus: DNA-directed RNA polymerase subunit beta (1221 aa).

The disordered stretch occupies residues 1176–1221 (EKKKLAEEEAEIAAEAEAEGSAEEDAAEADADANEAETADDDKASK). The segment covering 1183–1215 (EEAEIAAEAEAEGSAEEDAAEADADANEAETAD) has biased composition (acidic residues).

It belongs to the RNA polymerase beta chain family. As to quaternary structure, the RNAP catalytic core consists of 2 alpha, 1 beta, 1 beta' and 1 omega subunit. When a sigma factor is associated with the core the holoenzyme is formed, which can initiate transcription.

The catalysed reaction is RNA(n) + a ribonucleoside 5'-triphosphate = RNA(n+1) + diphosphate. DNA-dependent RNA polymerase catalyzes the transcription of DNA into RNA using the four ribonucleoside triphosphates as substrates. This Lactobacillus delbrueckii subsp. bulgaricus (strain ATCC BAA-365 / Lb-18) protein is DNA-directed RNA polymerase subunit beta.